The following is a 100-amino-acid chain: Small ribosomal subunit protein uS14c (100 aa).

This sequence belongs to the universal ribosomal protein uS14 family. As to quaternary structure, part of the 30S ribosomal subunit.

The protein localises to the plastid. The protein resides in the chloroplast. Binds 16S rRNA, required for the assembly of 30S particles. The protein is Small ribosomal subunit protein uS14c of Staurastrum punctulatum (Green alga).